Here is a 207-residue protein sequence, read N- to C-terminus: Ribosomal RNA large subunit methyltransferase E (207 aa).

Positions 60, 62, 80, 96, and 121 each coordinate S-adenosyl-L-methionine. K161 serves as the catalytic Proton acceptor.

The protein belongs to the class I-like SAM-binding methyltransferase superfamily. RNA methyltransferase RlmE family.

The protein localises to the cytoplasm. The catalysed reaction is uridine(2552) in 23S rRNA + S-adenosyl-L-methionine = 2'-O-methyluridine(2552) in 23S rRNA + S-adenosyl-L-homocysteine + H(+). In terms of biological role, specifically methylates the uridine in position 2552 of 23S rRNA at the 2'-O position of the ribose in the fully assembled 50S ribosomal subunit. This chain is Ribosomal RNA large subunit methyltransferase E, found in Thioalkalivibrio sulfidiphilus (strain HL-EbGR7).